We begin with the raw amino-acid sequence, 160 residues long: MSVVSIEELEKARAYGRPLAGLDLGTKTIGVAISDLGLSFATPRAYLPRKKFQEDAKALLHLLSRENAGGVIVGLPINMDGSEGPRAQSTRAFVRNLQPLTKLPFAFWDERLSTVAAERALIEMDVSRAKRAQRIDSAAAAFILQGALDRLQALRADPGG.

This sequence belongs to the YqgF nuclease family.

The protein resides in the cytoplasm. Could be a nuclease involved in processing of the 5'-end of pre-16S rRNA. This is Putative pre-16S rRNA nuclease from Chelativorans sp. (strain BNC1).